We begin with the raw amino-acid sequence, 330 residues long: Aspartate--ammonia ligase (330 aa).

This sequence belongs to the class-II aminoacyl-tRNA synthetase family. AsnA subfamily.

It is found in the cytoplasm. It carries out the reaction L-aspartate + NH4(+) + ATP = L-asparagine + AMP + diphosphate + H(+). It functions in the pathway amino-acid biosynthesis; L-asparagine biosynthesis; L-asparagine from L-aspartate (ammonia route): step 1/1. The protein is Aspartate--ammonia ligase of Serratia proteamaculans (strain 568).